The following is a 536-amino-acid chain: Suppressor of cytokine signaling 5 (536 aa).

Positions 1 to 50 (MDKVGKMWNNFKYRCQNLFGHEGGSRSENVDMNSNRCLSVKKKNISLGDS) are required for interaction with IL4R. Residues 115–175 (SRHAPWGGKK…SVSSRTVGSR (61 aa)) form a disordered region. Low complexity predominate over residues 158 to 169 (VSSVHDMDSVSS). The 96-residue stretch at 381-476 (CYWGVMDRYE…FFEPLLTISL (96 aa)) folds into the SH2 domain. An SOCS box domain is found at 471-520 (LLTISLNRTFPFSLQYICRAVICRCTTYDGIDGLPLPSMLQDFLKEYHYK).

In terms of assembly, interacts with EGFR. Interacts with ELOB and ELOC; mediates EGFR ubiquitination and degradation. Interacts with IL4R; inhibits IL4 signaling. In terms of processing, phosphorylated. Phosphorylation is induced by EGF.

The protein operates within protein modification; protein ubiquitination. In terms of biological role, SOCS family proteins form part of a classical negative feedback system that regulates cytokine signal transduction. May be a substrate-recognition component of a SCF-like ECS (Elongin BC-CUL2/5-SOCS-box protein) E3 ubiquitin-protein ligase complex which mediates the ubiquitination and subsequent proteasomal degradation of target proteins. Inhibits for instance EGF signaling by mediating the degradation of the EGF receptor/EGFR. Involved in the regulation of T-helper cell differentiation by inhibiting of the IL4 signaling pathway which promotes differentiation into the Th2 phenotype. Can also partially inhibit IL6 and LIF signaling. This Bos taurus (Bovine) protein is Suppressor of cytokine signaling 5 (SOCS5).